The following is a 150-amino-acid chain: Macrodomain Ter protein (150 aa).

Belongs to the MatP family. As to quaternary structure, homodimer.

The protein localises to the cytoplasm. Required for spatial organization of the terminus region of the chromosome (Ter macrodomain) during the cell cycle. Prevents early segregation of duplicated Ter macrodomains during cell division. Binds specifically to matS, which is a 13 bp signature motif repeated within the Ter macrodomain. This is Macrodomain Ter protein from Escherichia coli O6:K15:H31 (strain 536 / UPEC).